A 162-amino-acid chain; its full sequence is 2-C-methyl-D-erythritol 2,4-cyclodiphosphate synthase (162 aa).

Aspartate 8 and histidine 10 together coordinate a divalent metal cation. 4-CDP-2-C-methyl-D-erythritol 2-phosphate-binding positions include 8 to 10 and 36 to 37; these read DVH and HS. Histidine 44 serves as a coordination point for a divalent metal cation. 4-CDP-2-C-methyl-D-erythritol 2-phosphate is bound by residues 58 to 60, 63 to 67, 102 to 108, 134 to 137, phenylalanine 141, and arginine 144; these read DIG, FPDTD, AQAPKMA, and TTTE.

It belongs to the IspF family. In terms of assembly, homotrimer. Requires a divalent metal cation as cofactor.

The catalysed reaction is 4-CDP-2-C-methyl-D-erythritol 2-phosphate = 2-C-methyl-D-erythritol 2,4-cyclic diphosphate + CMP. Its pathway is isoprenoid biosynthesis; isopentenyl diphosphate biosynthesis via DXP pathway; isopentenyl diphosphate from 1-deoxy-D-xylulose 5-phosphate: step 4/6. Functionally, involved in the biosynthesis of isopentenyl diphosphate (IPP) and dimethylallyl diphosphate (DMAPP), two major building blocks of isoprenoid compounds. Catalyzes the conversion of 4-diphosphocytidyl-2-C-methyl-D-erythritol 2-phosphate (CDP-ME2P) to 2-C-methyl-D-erythritol 2,4-cyclodiphosphate (ME-CPP) with a corresponding release of cytidine 5-monophosphate (CMP). This is 2-C-methyl-D-erythritol 2,4-cyclodiphosphate synthase from Yersinia enterocolitica serotype O:8 / biotype 1B (strain NCTC 13174 / 8081).